The following is a 200-amino-acid chain: Transcriptional repressor NrdR (200 aa).

The segment at 3–34 (CPRCGKQEIRVLESRSAEGGQSVRRRRECMSC) is a zinc-finger region. The 91-residue stretch at 49-139 (IMVIKRDGSR…VYRKFQGIKD (91 aa)) folds into the ATP-cone domain. A disordered region spans residues 158–200 (LERPLRNSPPSESESTASPDWVGGIPQLLDQNDTSSNLSEIPK). A compositionally biased stretch (polar residues) spans 186-200 (LDQNDTSSNLSEIPK).

Belongs to the NrdR family. The cofactor is Zn(2+).

Its function is as follows. Negatively regulates transcription of bacterial ribonucleotide reductase nrd genes and operons by binding to NrdR-boxes. This is Transcriptional repressor NrdR from Synechococcus sp. (strain JA-3-3Ab) (Cyanobacteria bacterium Yellowstone A-Prime).